The primary structure comprises 94 residues: Protein RnfH (94 aa).

This sequence belongs to the UPF0125 (RnfH) family.

This is Protein RnfH from Sodalis glossinidius (strain morsitans).